Consider the following 338-residue polypeptide: Aspartate carbamoyltransferase catalytic subunit (338 aa).

Carbamoyl phosphate contacts are provided by Arg59 and Thr60. Lys87 serves as a coordination point for L-aspartate. Residues Arg109, His142, and Gln145 each coordinate carbamoyl phosphate. 2 residues coordinate L-aspartate: Arg182 and Arg253. Residues Gly294 and Pro295 each contribute to the carbamoyl phosphate site.

The protein belongs to the aspartate/ornithine carbamoyltransferase superfamily. ATCase family. Heterododecamer (2C3:3R2) of six catalytic PyrB chains organized as two trimers (C3), and six regulatory PyrI chains organized as three dimers (R2).

The catalysed reaction is carbamoyl phosphate + L-aspartate = N-carbamoyl-L-aspartate + phosphate + H(+). Its pathway is pyrimidine metabolism; UMP biosynthesis via de novo pathway; (S)-dihydroorotate from bicarbonate: step 2/3. Functionally, catalyzes the condensation of carbamoyl phosphate and aspartate to form carbamoyl aspartate and inorganic phosphate, the committed step in the de novo pyrimidine nucleotide biosynthesis pathway. This is Aspartate carbamoyltransferase catalytic subunit from Prochlorococcus marinus (strain MIT 9301).